A 424-amino-acid chain; its full sequence is Serine--tRNA ligase (424 aa).

Position 230–232 (230–232 (TAE)) interacts with L-serine. 261–263 (RSE) provides a ligand contact to ATP. Glutamate 284 contacts L-serine. An ATP-binding site is contributed by 348 to 351 (EISS). Serine 384 contacts L-serine.

This sequence belongs to the class-II aminoacyl-tRNA synthetase family. Type-1 seryl-tRNA synthetase subfamily. Homodimer. The tRNA molecule binds across the dimer.

It localises to the cytoplasm. It carries out the reaction tRNA(Ser) + L-serine + ATP = L-seryl-tRNA(Ser) + AMP + diphosphate + H(+). The catalysed reaction is tRNA(Sec) + L-serine + ATP = L-seryl-tRNA(Sec) + AMP + diphosphate + H(+). Its pathway is aminoacyl-tRNA biosynthesis; selenocysteinyl-tRNA(Sec) biosynthesis; L-seryl-tRNA(Sec) from L-serine and tRNA(Sec): step 1/1. Its function is as follows. Catalyzes the attachment of serine to tRNA(Ser). Is also able to aminoacylate tRNA(Sec) with serine, to form the misacylated tRNA L-seryl-tRNA(Sec), which will be further converted into selenocysteinyl-tRNA(Sec). The polypeptide is Serine--tRNA ligase (Streptococcus pneumoniae (strain 70585)).